A 166-amino-acid chain; its full sequence is Thioredoxin, mitochondrial (166 aa).

The transit peptide at 1 to 59 (MAQRLLLGRFLTSVISRKPPQGVWASLTSKTLQTPQYNAGGLTVMPSPARTVHTTRVCL) directs the protein to the mitochondrion. In terms of domain architecture, Thioredoxin spans 61 to 166 (TFNVQDGPDF…LEAFLKKLIG (106 aa)). Active-site nucleophile residues include Cys-90 and Cys-93. A disulfide bond links Cys-90 and Cys-93. Position 152 is an N6-acetyllysine; alternate (Lys-152). Lys-152 bears the N6-succinyllysine; alternate mark.

Belongs to the thioredoxin family. As to quaternary structure, monomer.

It localises to the mitochondrion. In terms of biological role, important for the control of mitochondrial reactive oxygen species homeostasis, apoptosis regulation and cell viability. Is involved in various redox reactions including the reduction of protein disulfide bonds, through the reversible oxidation of its active center dithiol to a disulfide. The sequence is that of Thioredoxin, mitochondrial (Txn2) from Mus musculus (Mouse).